The chain runs to 1048 residues: Putative helicase/primase complex protein (1048 aa).

A disordered region spans residues 1025–1048 (STKEESSPTREETSSIKEKTFTET).

The protein belongs to the asfivirus F1055L family.

In terms of biological role, may be involved in DNA replication. The chain is Putative helicase/primase complex protein from African swine fever virus (isolate Pig/Kenya/KEN-50/1950) (ASFV).